Here is a 264-residue protein sequence, read N- to C-terminus: MSLVAESNSGTISEQELDKVQLYSDLCLYEEALTKLVDSVDNFKPQLEIGKQLIEADKKLYSTLDLLPQYDSVFTRLRTLDDEISKVDQQTKNILSILNECHDDLNALPLLEEVEFEKKMILKQREKIKSNVLLEYATKLAKFTKIPPTFDKGTIGPNNFIWPAEDALRKGMLAMASLHGKELTKLPGQEDGEEDGSTANEDKNIVKDAEGAEGEIRQDDKKEDDSFVFGANANDAEGDEDKNAGEDEDEAMDSDLDLFNPDEF.

Residues 183 to 264 (LTKLPGQEDG…DLDLFNPDEF (82 aa)) are disordered. Residues 200-225 (NEDKNIVKDAEGAEGEIRQDDKKEDD) are compositionally biased toward basic and acidic residues. Residues 236 to 264 (AEGDEDKNAGEDEDEAMDSDLDLFNPDEF) are compositionally biased toward acidic residues.

The protein belongs to the Mediator complex subunit 4 family. As to quaternary structure, component of the Mediator complex.

The protein localises to the nucleus. In terms of biological role, component of the Mediator complex, a coactivator involved in the regulated transcription of nearly all RNA polymerase II-dependent genes. Mediator functions as a bridge to convey information from gene-specific regulatory proteins to the basal RNA polymerase II transcription machinery. Mediator is recruited to promoters by direct interactions with regulatory proteins and serves as a scaffold for the assembly of a functional preinitiation complex with RNA polymerase II and the general transcription factors. The sequence is that of Mediator of RNA polymerase II transcription subunit 4 (MED4) from Candida glabrata (strain ATCC 2001 / BCRC 20586 / JCM 3761 / NBRC 0622 / NRRL Y-65 / CBS 138) (Yeast).